The following is a 119-amino-acid chain: Large ribosomal subunit protein uL18 (119 aa).

Belongs to the universal ribosomal protein uL18 family. Part of the 50S ribosomal subunit; part of the 5S rRNA/L5/L18/L25 subcomplex. Contacts the 5S and 23S rRNAs.

In terms of biological role, this is one of the proteins that bind and probably mediate the attachment of the 5S RNA into the large ribosomal subunit, where it forms part of the central protuberance. The sequence is that of Large ribosomal subunit protein uL18 from Xylella fastidiosa (strain 9a5c).